The chain runs to 2184 residues: Chromodomain-helicase-DNA-binding protein 8 (2184 aa).

Disordered regions lie at residues 379–399 and 419–527; these read VKTS…KQEK and IPRV…KRKK. Residues 387 to 399 show a composition bias toward basic and acidic residues; that stretch reads ESRKLDSQKKQEK. Over residues 425-437 the composition is skewed to acidic residues; the sequence is EDELPSVNPEDDD. A compositionally biased stretch (basic and acidic residues) spans 448-459; the sequence is GETSDRSKDEKP. A compositionally biased stretch (basic residues) spans 516–527; the sequence is KRRSNRQVKRKK. Chromo domains lie at 586–653 and 668–734; these read AIVD…TQMQ and VEVD…RVAR. Residues 767-941 form the Helicase ATP-binding domain; it reads LFNWYNRQNC…FSLLHFLEPT (175 aa). 780–787 serves as a coordination point for ATP; sequence DEMGLGKT. Positions 892–895 match the DEAH box motif; that stretch reads DEAH. The Helicase C-terminal domain maps to 1081 to 1252; the sequence is LIDKLLPKLR…FTKKEIEDLL (172 aa). 2 disordered regions span residues 1907-1989 and 2039-2076; these read GISG…EESR and WSSP…PAPD. 2 stretches are compositionally biased toward low complexity: residues 1912-1961 and 2040-2054; these read SRPS…SNSE and SSPR…DSPD.

This sequence belongs to the SNF2/RAD54 helicase family. CHD8 subfamily. Component of some MLL1/MLL complex.

Its subcellular location is the nucleus. It catalyses the reaction ATP + H2O = ADP + phosphate + H(+). Its function is as follows. ATP-dependent chromatin-remodeling factor, it slides nucleosomes along DNA; nucleosome sliding requires ATP. Acts as a transcription repressor by remodeling chromatin structure and recruiting histone H1 to target genes. Suppresses p53/tp53-mediated apoptosis by recruiting histone H1 and preventing p53/tp53 transactivation activity. Acts as a negative regulator of Wnt signaling pathway by regulating beta-catenin (ctnnb1) activity. Negatively regulates ctnnb1-targeted gene expression by being recruited specifically to the promoter regions of several ctnnb1 responsive genes. May also act as a transcription activator by participating in efficient U6 RNA polymerase III transcription. This is Chromodomain-helicase-DNA-binding protein 8 from Xenopus tropicalis (Western clawed frog).